Consider the following 254-residue polypeptide: Alcohol dehydrogenase 2 (254 aa).

NAD(+) is bound at residue Phe10–Leu33. Ser138 contributes to the substrate binding site. Catalysis depends on Tyr151, which acts as the Proton acceptor.

The protein belongs to the short-chain dehydrogenases/reductases (SDR) family. Homodimer.

The enzyme catalyses a primary alcohol + NAD(+) = an aldehyde + NADH + H(+). It carries out the reaction a secondary alcohol + NAD(+) = a ketone + NADH + H(+). In Drosophila montana (Fruit fly), this protein is Alcohol dehydrogenase 2 (Adh2).